The sequence spans 492 residues: GDP-Man:Man(3)GlcNAc(2)-PP-Dol alpha-1,2-mannosyltransferase (492 aa).

At 1–19 (MAADTGSWCVYAVLRFFYS) the chain is on the lumenal side. The chain crosses the membrane as a helical span at residues 20–40 (LFFPGLMICGVLCVYLVIGLW). The Cytoplasmic segment spans residues 41-233 (VIRWHLQRKK…SRNALLSKAK (193 aa)). An intramembrane region (helical) is located at residues 234-254 (LIYYYLFAFVYGLVGSCSDIV). The Cytoplasmic portion of the chain corresponds to 255–399 (MVNSSWTLNH…IGLHTMWNEH (145 aa)). The helical intramembrane region spans 400–420 (FGIGVVECMAAGTVILAHNSG). Topologically, residues 421 to 492 (GPKLDIVIPH…FLCSMEKLLT (72 aa)) are cytoplasmic.

Belongs to the glycosyltransferase group 1 family. Glycosyltransferase 4 subfamily.

Its subcellular location is the endoplasmic reticulum membrane. It catalyses the reaction an alpha-D-Man-(1-&gt;3)-[alpha-D-Man-(1-&gt;6)]-beta-D-Man-(1-&gt;4)-beta-D-GlcNAc-(1-&gt;4)-alpha-D-GlcNAc-diphospho-di-trans,poly-cis-dolichol + 2 GDP-alpha-D-mannose = an alpha-D-Man-(1-&gt;2)-alpha-D-Man-(1-&gt;2)-alpha-D-Man-(1-&gt;3)-[alpha-D-Man-(1-&gt;6)]-beta-D-Man-(1-&gt;4)-beta-D-GlcNAc-(1-&gt;4)-alpha-D-GlcNAc-diphospho-di-trans,poly-cis-dolichol + 2 GDP + 2 H(+). It functions in the pathway protein modification; protein glycosylation. In terms of biological role, GDP-Man:Man(3)GlcNAc(2)-PP-Dol alpha-1,2-mannosyltransferase that operates in the biosynthetic pathway of dolichol-linked oligosaccharides, the glycan precursors employed in protein asparagine (N)-glycosylation. The assembly of dolichol-linked oligosaccharides begins on the cytosolic side of the endoplasmic reticulum membrane and finishes in its lumen. The sequential addition of sugars to dolichol pyrophosphate produces dolichol-linked oligosaccharides containing fourteen sugars, including two GlcNAcs, nine mannoses and three glucoses. Once assembled, the oligosaccharide is transferred from the lipid to nascent proteins by oligosaccharyltransferases. Catalyzes, on the cytoplasmic face of the endoplasmic reticulum, the addition of the fourth and fifth mannose residues to the dolichol-linked oligosaccharide chain, to produce Man(5)GlcNAc(2)-PP-dolichol core oligosaccharide. Man(5)GlcNAc(2)-PP-dolichol is a substrate for ALG3, the following enzyme in the biosynthetic pathway. In Mus musculus (Mouse), this protein is GDP-Man:Man(3)GlcNAc(2)-PP-Dol alpha-1,2-mannosyltransferase.